Consider the following 276-residue polypeptide: Type II pantothenate kinase (276 aa).

8-15 (DAGGTLTK) provides a ligand contact to ATP. E76 serves as the catalytic Proton acceptor. ATP contacts are provided by residues T105, 127–131 (GGTIM), F143, and S230.

This sequence belongs to the type II pantothenate kinase family. In terms of assembly, homodimer.

The protein resides in the cytoplasm. It catalyses the reaction (R)-pantothenate + ATP = (R)-4'-phosphopantothenate + ADP + H(+). It functions in the pathway cofactor biosynthesis; coenzyme A biosynthesis; CoA from (R)-pantothenate: step 1/5. Functionally, catalyzes the phosphorylation of pantothenate (Pan), the first step in CoA biosynthesis. This is Type II pantothenate kinase from Bacillus cereus (strain ATCC 10987 / NRS 248).